The following is a 185-amino-acid chain: MPRLFLFHLLEFCLLLNQFSRAVAAKWKDDVIKLCGRELVRAQIAICGMSTWSKRSLSQEDAPQTPRPVAEIVPSFINKDTETIIIMLEFIANLPPELKAALSERQPSLPELQQYVPALKDSNLSFEEFKKLIRNRQSEAADSNPSELKYLGLDTHSQKKRRPYVALFEKCCLIGCTKRSLAKYC.

Residues 1–22 (MPRLFLFHLLEFCLLLNQFSRA) form the signal peptide. 3 disulfides stabilise this stretch: C35–C172, C47–C185, and C171–C176. Positions 56–158 (SLSQEDAPQT…KYLGLDTHSQ (103 aa)) are cleaved as a propeptide — connecting peptide.

The protein belongs to the insulin family. Heterodimer of a B chain and an A chain linked by two disulfide bonds. In terms of tissue distribution, prostate. Not expressed in placenta, decidua or ovary.

The protein localises to the secreted. Its function is as follows. Relaxin is an ovarian hormone that acts with estrogen to produce dilatation of the birth canal in many mammals. May be involved in remodeling of connective tissues during pregnancy, promoting growth of pubic ligaments and ripening of the cervix. This is Prorelaxin H1 (RLN1) from Homo sapiens (Human).